Here is a 318-residue protein sequence, read N- to C-terminus: NAD kinase (318 aa).

Residue aspartate 80 is the Proton acceptor of the active site. NAD(+)-binding positions include 80–81, arginine 85, 155–156, aspartate 185, and 196–201; these read DG, NE, and TAYAFS.

Belongs to the NAD kinase family. The cofactor is a divalent metal cation.

Its subcellular location is the cytoplasm. The catalysed reaction is NAD(+) + ATP = ADP + NADP(+) + H(+). Involved in the regulation of the intracellular balance of NAD and NADP, and is a key enzyme in the biosynthesis of NADP. Catalyzes specifically the phosphorylation on 2'-hydroxyl of the adenosine moiety of NAD to yield NADP. The chain is NAD kinase from Corynebacterium efficiens (strain DSM 44549 / YS-314 / AJ 12310 / JCM 11189 / NBRC 100395).